A 173-amino-acid polypeptide reads, in one-letter code: Large ribosomal subunit protein uL29c (173 aa).

The transit peptide at 1–60 (MLSLSIATPGTAAIFRRGTASATSTSSSFHGVRIQHQVSARVPAAATISSSSPKPSVVMM) directs the protein to the chloroplast. The segment at 143–173 (KKSIVPRPPPSLKKLQEEEAAEEAAEAAKSA) is disordered. Residue serine 172 is modified to Phosphoserine.

The protein belongs to the universal ribosomal protein uL29 family. In terms of assembly, part of the 50S ribosomal subunit.

The protein resides in the plastid. It is found in the chloroplast. This Arabidopsis thaliana (Mouse-ear cress) protein is Large ribosomal subunit protein uL29c (RPL29).